Consider the following 92-residue polypeptide: Turripeptide UID-02 (92 aa).

An N-terminal signal peptide occupies residues 1–21 (MGFYMLLTVALLLTSLMNVEA). A propeptide spanning residues 22 to 39 (TPVDQAERSALEKSGLGN) is cleaved from the precursor.

As to expression, expressed by the venom duct.

The protein resides in the secreted. The chain is Turripeptide UID-02 from Gemmula speciosa (Splendid gem-turris).